The primary structure comprises 234 residues: Glycoprotein BDLF3 (234 aa).

Positions 1–28 are cleaved as a signal peptide; the sequence is MAHARDKAGAVMAMILICETSLIWTSSG. The tract at residues 29 to 62 is disordered; it reads SSTASAGNVTGTTAVTTPSPSASGPSTNQSTTLT. N-linked (GlcNAc...) asparagine; by host glycosylation is found at Asn-36, Asn-56, Asn-77, Asn-96, Asn-101, Asn-110, Asn-127, Asn-144, and Asn-159. The segment at 116–138 is disordered; that stretch reads AGTGTSTGVTSNVTTRSSSTTSA. The chain crosses the membrane as a helical span at residues 187–207; that stretch reads LVFVGLTFLMLILIFAAGLMM.

Belongs to the Epstein-Barr virus BDLF3 protein family.

It localises to the membrane. In Homo sapiens (Human), this protein is Glycoprotein BDLF3.